A 194-amino-acid chain; its full sequence is Fe/S biogenesis protein NfuA (194 aa).

[4Fe-4S] cluster contacts are provided by C152 and C155.

The protein belongs to the NfuA family. In terms of assembly, homodimer. The cofactor is [4Fe-4S] cluster.

Involved in iron-sulfur cluster biogenesis. Binds a 4Fe-4S cluster, can transfer this cluster to apoproteins, and thereby intervenes in the maturation of Fe/S proteins. Could also act as a scaffold/chaperone for damaged Fe/S proteins. This is Fe/S biogenesis protein NfuA from Azotobacter vinelandii (strain DJ / ATCC BAA-1303).